The primary structure comprises 160 residues: Allophycocyanin alpha chain (160 aa).

Asn70 carries the post-translational modification N4-methylasparagine. Cys80 is a binding site for (2R,3E)-phycocyanobilin.

The protein belongs to the phycobiliprotein family. In terms of assembly, component of the phycobilisome. Heterodimer of an alpha and a beta chain. In terms of processing, contains one covalently linked phycocyanobilin chromophore.

The protein resides in the cellular thylakoid membrane. In terms of biological role, light-harvesting photosynthetic bile pigment-protein from the phycobiliprotein complex. Allophycocyanin has a maximum absorption at approximately 650 nanometers. The chain is Allophycocyanin alpha chain (apcA) from Mastigocladus laminosus (Fischerella sp.).